A 272-amino-acid polypeptide reads, in one-letter code: Glutamate racemase (272 aa).

Residues 16–17 and 48–49 contribute to the substrate site; these read DS and YG. The active-site Proton donor/acceptor is the Cys79. Substrate is bound at residue 80 to 81; sequence NT. Cys191 (proton donor/acceptor) is an active-site residue. 192 to 193 serves as a coordination point for substrate; it reads TH.

It belongs to the aspartate/glutamate racemases family.

The enzyme catalyses L-glutamate = D-glutamate. It participates in cell wall biogenesis; peptidoglycan biosynthesis. In terms of biological role, provides the (R)-glutamate required for cell wall biosynthesis. This is Glutamate racemase from Chlorobium phaeobacteroides (strain DSM 266 / SMG 266 / 2430).